Reading from the N-terminus, the 32-residue chain is Photosystem I reaction center subunit XII (32 aa).

Residues 4–26 form a helical membrane-spanning segment; sequence ISDSQIIVILLSVFITSILALRL.

This sequence belongs to the PsaM family.

The protein localises to the plastid. It localises to the chloroplast thylakoid membrane. This chain is Photosystem I reaction center subunit XII, found in Marchantia polymorpha (Common liverwort).